Consider the following 195-residue polypeptide: Thymidylate kinase (195 aa).

Gly-7–Ser-14 contributes to the ATP binding site.

This sequence belongs to the thymidylate kinase family.

It catalyses the reaction dTMP + ATP = dTDP + ADP. Phosphorylation of dTMP to form dTDP in both de novo and salvage pathways of dTTP synthesis. In Campylobacter hominis (strain ATCC BAA-381 / DSM 21671 / CCUG 45161 / LMG 19568 / NCTC 13146 / CH001A), this protein is Thymidylate kinase.